The following is a 134-amino-acid chain: Fluoride-specific ion channel FluC 2 (134 aa).

The next 4 membrane-spanning stretches (helical) occupy residues 10 to 30 (LSAE…GALL), 43 to 63 (LLVN…PAAP), 67 to 87 (LLVG…MVDA), and 100 to 120 (FGLI…GFWL). 2 residues coordinate Na(+): Gly75 and Thr78.

It belongs to the fluoride channel Fluc/FEX (TC 1.A.43) family.

It is found in the cell inner membrane. It carries out the reaction fluoride(in) = fluoride(out). With respect to regulation, na(+) is not transported, but it plays an essential structural role and its presence is essential for fluoride channel function. In terms of biological role, fluoride-specific ion channel. Important for reducing fluoride concentration in the cell, thus reducing its toxicity. The chain is Fluoride-specific ion channel FluC 2 from Synechococcus sp. (strain CC9902).